The sequence spans 342 residues: Farnesyl pyrophosphate synthase 2 (342 aa).

Isopentenyl diphosphate is bound by residues Lys48, Arg51, and Gln86. 2 residues coordinate Mg(2+): Asp93 and Asp97. Dimethylallyl diphosphate is bound at residue Arg102. Arg103 is an isopentenyl diphosphate binding site. Positions 190, 191, 229, 246, and 255 each coordinate dimethylallyl diphosphate.

This sequence belongs to the FPP/GGPP synthase family. Mg(2+) serves as cofactor.

It localises to the cytoplasm. It carries out the reaction isopentenyl diphosphate + dimethylallyl diphosphate = (2E)-geranyl diphosphate + diphosphate. The catalysed reaction is isopentenyl diphosphate + (2E)-geranyl diphosphate = (2E,6E)-farnesyl diphosphate + diphosphate. Its pathway is isoprenoid biosynthesis; farnesyl diphosphate biosynthesis; farnesyl diphosphate from geranyl diphosphate and isopentenyl diphosphate: step 1/1. It functions in the pathway isoprenoid biosynthesis; geranyl diphosphate biosynthesis; geranyl diphosphate from dimethylallyl diphosphate and isopentenyl diphosphate: step 1/1. In terms of biological role, catalyzes the sequential condensation of isopentenyl pyrophosphate with the allylic pyrophosphates, dimethylallyl pyrophosphate, and then with the resultant geranylpyrophosphate to the ultimate product farnesyl pyrophosphate. The polypeptide is Farnesyl pyrophosphate synthase 2 (FPS2) (Parthenium argentatum (Guayule rubber plant)).